We begin with the raw amino-acid sequence, 623 residues long: Lamin-B2.L (623 aa).

A compositionally biased stretch (low complexity) spans methionine 1–alanine 18. The tract at residues methionine 1–isoleucine 30 is disordered. The head stretch occupies residues alanine 2–proline 27. Residues arginine 19–isoleucine 30 are compositionally biased toward polar residues. At serine 26 the chain carries Phosphoserine. Residues threonine 28–methionine 64 form a coil 1A region. The region spanning glutamate 35 to leucine 391 is the IF rod domain. The segment at methionine 64 to threonine 74 is linker 1. The tract at residues threonine 75 to arginine 211 is coil 1B. Positions lysine 212–arginine 235 are linker 2. The coil 2 stretch occupies residues glycine 236–asparagine 378. The tract at residues tyrosine 380–glutamate 592 is tail. 2 disordered regions span residues glutamate 388–glutamine 473 and valine 591–methionine 623. A Phosphoserine modification is found at serine 396. Positions glutamate 398–threonine 416 are enriched in low complexity. The short motif at lysine 420–glutamate 425 is the Nuclear localization signal element. The segment covering leucine 443–glutamine 473 has biased composition (polar residues). Residues phenylalanine 468–lysine 585 enclose the LTD domain. The segment covering glutamate 592–glutamate 604 has biased composition (acidic residues). The segment covering aspartate 612–methionine 623 has biased composition (polar residues). The residue at position 620 (cysteine 620) is a Cysteine methyl ester. Cysteine 620 is lipidated: S-farnesyl cysteine. Positions serine 621–methionine 623 are cleaved as a propeptide — removed in mature form.

This sequence belongs to the intermediate filament family. Phosphorylation plays a key role in lamin organization, subcellular localization and nuclear envelope disintegration. Phosphorylation by CDK1 at Ser-26 at the onset of mitosis drives lamin disassembly and nuclear envelope breakdown.

It localises to the nucleus lamina. It is found in the nucleus envelope. The protein resides in the nucleus. Its subcellular location is the nucleoplasm. The protein localises to the nucleus matrix. Its function is as follows. Lamins are intermediate filament proteins that assemble into a filamentous meshwork, and which constitute the major components of the nuclear lamina, a fibrous layer on the nucleoplasmic side of the inner nuclear membrane. Lamins provide a framework for the nuclear envelope, bridging the nuclear envelope and chromatin, thereby playing an important role in nuclear assembly, chromatin organization, nuclear membrane and telomere dynamics. The structural integrity of the lamina is strictly controlled by the cell cycle, as seen by the disintegration and formation of the nuclear envelope in prophase and telophase, respectively. The chain is Lamin-B2.L (lmnb2.L) from Xenopus laevis (African clawed frog).